A 160-amino-acid chain; its full sequence is Nucleotide-binding protein AHA_1129 (160 aa).

Belongs to the YajQ family.

Nucleotide-binding protein. In Aeromonas hydrophila subsp. hydrophila (strain ATCC 7966 / DSM 30187 / BCRC 13018 / CCUG 14551 / JCM 1027 / KCTC 2358 / NCIMB 9240 / NCTC 8049), this protein is Nucleotide-binding protein AHA_1129.